We begin with the raw amino-acid sequence, 256 residues long: uncharacterized protein (256 aa).

A signal peptide spans 1-23 (MKRLNKLVLGIIFLFLVISITAG). Cys24 carries the N-palmitoyl cysteine lipid modification. Cys24 carries the S-diacylglycerol cysteine lipid modification.

It belongs to the staphylococcal tandem lipoprotein family.

It is found in the cell membrane. This is an uncharacterized protein from Staphylococcus aureus (strain COL).